The chain runs to 405 residues: Serine--glyoxylate aminotransferase (405 aa).

At K196 the chain carries N6-(pyridoxal phosphate)lysine.

The protein belongs to the class-V pyridoxal-phosphate-dependent aminotransferase family. Pyridoxal 5'-phosphate serves as cofactor.

It catalyses the reaction glyoxylate + L-serine = 3-hydroxypyruvate + glycine. It functions in the pathway one-carbon metabolism; formaldehyde assimilation via serine pathway. In Hyphomicrobium methylovorum, this protein is Serine--glyoxylate aminotransferase (sgaA).